Consider the following 280-residue polypeptide: Dimethylglycine N-methyltransferase (280 aa).

The protein belongs to the methyltransferase superfamily. In terms of assembly, monomer.

It catalyses the reaction N,N-dimethylglycine + S-adenosyl-L-methionine = glycine betaine + S-adenosyl-L-homocysteine + H(+). It functions in the pathway amine and polyamine biosynthesis; betaine biosynthesis via glycine pathway; betaine from glycine: step 3/3. Its function is as follows. Catalyzes the methylation of dimethylglycine to betaine with S-adenosylmethionine (AdoMet) acting as the methyl donor. It has strict specificity for dimethylglycine as the methyl group acceptors. The sequence is that of Dimethylglycine N-methyltransferase from Parasynechococcus marenigrum (strain WH8102).